Reading from the N-terminus, the 303-residue chain is Terpene synthase (303 aa).

The Mg(2+) site is built by D69 and D73. The DDXXD motif signature appears at 69-73 (DDIQD).

The protein belongs to the FPP/GGPP synthase family. Requires Mg(2+) as cofactor.

The enzyme catalyses (2E)-geranyl diphosphate + H2O = (2E)-geraniol + diphosphate. In terms of biological role, terpene synthase that is able to convert geraniol diphosphate to geraniol in tea leaves. The sequence is that of Terpene synthase from Matsumurasca onukii (Tea green leafhopper).